We begin with the raw amino-acid sequence, 173 residues long: Flavodoxin 2 (173 aa).

A Flavodoxin-like domain is found at 3–165 (MGLFYGSSTC…RIQTWCEQIL (163 aa)).

The protein belongs to the flavodoxin family. FMN serves as cofactor.

Functionally, low-potential electron donor to a number of redox enzymes. This Salmonella typhi protein is Flavodoxin 2 (fldB).